A 352-amino-acid polypeptide reads, in one-letter code: Protein RecA (352 aa).

ATP is bound at residue 66–73 (GPESSGKT).

It belongs to the RecA family.

The protein resides in the cytoplasm. In terms of biological role, can catalyze the hydrolysis of ATP in the presence of single-stranded DNA, the ATP-dependent uptake of single-stranded DNA by duplex DNA, and the ATP-dependent hybridization of homologous single-stranded DNAs. It interacts with LexA causing its activation and leading to its autocatalytic cleavage. The polypeptide is Protein RecA (Psychrobacter arcticus (strain DSM 17307 / VKM B-2377 / 273-4)).